The following is a 454-amino-acid chain: Probable xylan O-acetyltransferase 9 (454 aa).

Residues 1–15 (MKAPPPPSPVAKRAR) are Cytoplasmic-facing. A helical; Signal-anchor for type II membrane protein transmembrane segment spans residues 16–36 (VSPFVFLLVLFLLLFSFLYGE). Residues 37-454 (DLKELLGSQA…ELLYTKLFYP (418 aa)) lie on the Lumenal side of the membrane. Cystine bridges form between C101–C152, C123–C188, C132–C435, and C352–C431. The GDS motif motif lies at 175 to 177 (GDS). Catalysis depends on S177, which acts as the Nucleophile. N-linked (GlcNAc...) asparagine glycans are attached at residues N219, N293, and N394. The Proton donor role is filled by D430. Residues 430-433 (DCVH) carry the DXXH motif motif. H433 functions as the Proton acceptor in the catalytic mechanism.

This sequence belongs to the PC-esterase family. TBL subfamily.

The protein resides in the golgi apparatus membrane. Functionally, probable xylan acetyltransferase required for 2-O- and 3-O-monoacetylation of xylosyl residues in xylan. Possesses extremely low activity in vitro. This Oryza sativa subsp. japonica (Rice) protein is Probable xylan O-acetyltransferase 9.